The primary structure comprises 525 residues: GMP synthase [glutamine-hydrolyzing] (525 aa).

The Glutamine amidotransferase type-1 domain maps to 9–207 (RILILDFGSQ…VRDICQCEAL (199 aa)). Residue cysteine 86 is the Nucleophile of the active site. Residues histidine 181 and glutamate 183 contribute to the active site. The GMPS ATP-PPase domain occupies 208 to 400 (WTPAKIIDDA…LGLPYDMLYR (193 aa)). 235 to 241 (SGGVDSS) is a binding site for ATP.

As to quaternary structure, homodimer.

It catalyses the reaction XMP + L-glutamine + ATP + H2O = GMP + L-glutamate + AMP + diphosphate + 2 H(+). It functions in the pathway purine metabolism; GMP biosynthesis; GMP from XMP (L-Gln route): step 1/1. In terms of biological role, catalyzes the synthesis of GMP from XMP. The polypeptide is GMP synthase [glutamine-hydrolyzing] (Escherichia fergusonii (strain ATCC 35469 / DSM 13698 / CCUG 18766 / IAM 14443 / JCM 21226 / LMG 7866 / NBRC 102419 / NCTC 12128 / CDC 0568-73)).